A 294-amino-acid chain; its full sequence is Tryptophan 2,3-dioxygenase (294 aa).

Residues Phe63–His67, Tyr125, and Arg129 contribute to the substrate site. Residue His252 participates in heme binding. Substrate is bound at residue Thr266.

The protein belongs to the tryptophan 2,3-dioxygenase family. In terms of assembly, homotetramer. It depends on heme as a cofactor.

It carries out the reaction L-tryptophan + O2 = N-formyl-L-kynurenine. It functions in the pathway amino-acid degradation; L-tryptophan degradation via kynurenine pathway; L-kynurenine from L-tryptophan: step 1/2. Its function is as follows. Heme-dependent dioxygenase that catalyzes the oxidative cleavage of the L-tryptophan (L-Trp) pyrrole ring and converts L-tryptophan to N-formyl-L-kynurenine. Catalyzes the oxidative cleavage of the indole moiety. The protein is Tryptophan 2,3-dioxygenase of Polaromonas sp. (strain JS666 / ATCC BAA-500).